The chain runs to 336 residues: Cytosolic 5'-nucleotidase 3A (336 aa).

Asp88 serves as the catalytic Nucleophile. Residues Asp88 and Asp90 each coordinate Mg(2+). The active-site Proton donor is the Asp90. Position 135 (Glu135) interacts with CMP. N(7)-methyl-GMP is bound by residues Glu135 and Ser156. Substrate contacts are provided by residues 203–204 (SA) and Lys252. Asp277 lines the Mg(2+) pocket. At Ser278 the chain carries Phosphoserine.

The protein belongs to the pyrimidine 5'-nucleotidase family. As to quaternary structure, monomer. As to expression, isoforms 1, 3 and 4 are expressed in reticulocytes. Isoform 4 is hardly detectable in bone marrow and fetal liver.

The protein resides in the cytoplasm. It localises to the endoplasmic reticulum. It carries out the reaction N(7)-methyl-GMP + H2O = N(7)-methylguanosine + phosphate. It catalyses the reaction CMP + H2O = cytidine + phosphate. The catalysed reaction is a ribonucleoside 5'-phosphate + H2O = a ribonucleoside + phosphate. Nucleotidase which shows specific activity towards cytidine monophosphate (CMP) and 7-methylguanosine monophosphate (m(7)GMP). CMP seems to be the preferred substrate. The polypeptide is Cytosolic 5'-nucleotidase 3A (NT5C3A) (Homo sapiens (Human)).